The sequence spans 224 residues: UPF0173 metal-dependent hydrolase TTHA1283 (224 aa).

This sequence belongs to the UPF0173 family.

This Thermus thermophilus (strain ATCC 27634 / DSM 579 / HB8) protein is UPF0173 metal-dependent hydrolase TTHA1283.